We begin with the raw amino-acid sequence, 236 residues long: Demethylmenaquinone methyltransferase (236 aa).

Residues threonine 58, aspartate 79, and 106-107 (NA) contribute to the S-adenosyl-L-methionine site.

This sequence belongs to the class I-like SAM-binding methyltransferase superfamily. MenG/UbiE family.

The enzyme catalyses a 2-demethylmenaquinol + S-adenosyl-L-methionine = a menaquinol + S-adenosyl-L-homocysteine + H(+). Its pathway is quinol/quinone metabolism; menaquinone biosynthesis; menaquinol from 1,4-dihydroxy-2-naphthoate: step 2/2. Its function is as follows. Methyltransferase required for the conversion of demethylmenaquinol (DMKH2) to menaquinol (MKH2). This is Demethylmenaquinone methyltransferase from Alkalihalophilus pseudofirmus (strain ATCC BAA-2126 / JCM 17055 / OF4) (Bacillus pseudofirmus).